The sequence spans 423 residues: Serine--tRNA ligase (423 aa).

Over residues 1–12 the composition is skewed to basic and acidic residues; sequence MIDLKALRENPD. The interval 1–26 is disordered; sequence MIDLKALRENPDVGRASQRSRGEDPE. 230–232 serves as a coordination point for L-serine; sequence TSE. ATP is bound by residues 261-263 and Val277; that span reads RRE. An L-serine-binding site is contributed by Glu284. Residue 348–351 participates in ATP binding; that stretch reads ELTS. Thr383 provides a ligand contact to L-serine.

The protein belongs to the class-II aminoacyl-tRNA synthetase family. Type-1 seryl-tRNA synthetase subfamily. As to quaternary structure, homodimer. The tRNA molecule binds across the dimer.

It is found in the cytoplasm. It carries out the reaction tRNA(Ser) + L-serine + ATP = L-seryl-tRNA(Ser) + AMP + diphosphate + H(+). It catalyses the reaction tRNA(Sec) + L-serine + ATP = L-seryl-tRNA(Sec) + AMP + diphosphate + H(+). The protein operates within aminoacyl-tRNA biosynthesis; selenocysteinyl-tRNA(Sec) biosynthesis; L-seryl-tRNA(Sec) from L-serine and tRNA(Sec): step 1/1. Functionally, catalyzes the attachment of serine to tRNA(Ser). Is also able to aminoacylate tRNA(Sec) with serine, to form the misacylated tRNA L-seryl-tRNA(Sec), which will be further converted into selenocysteinyl-tRNA(Sec). The sequence is that of Serine--tRNA ligase from Beutenbergia cavernae (strain ATCC BAA-8 / DSM 12333 / CCUG 43141 / JCM 11478 / NBRC 16432 / NCIMB 13614 / HKI 0122).